The sequence spans 915 residues: Alpha-xylosidase 1 (915 aa).

The signal sequence occupies residues Met1–Ser27. Asn153, Asn304, and Asn375 each carry an N-linked (GlcNAc...) asparagine glycan. Catalysis depends on residues Asp440 and Glu443. Asn476 and Asn490 each carry an N-linked (GlcNAc...) asparagine glycan. Asp563 functions as the Proton donor in the catalytic mechanism. Asn819, Asn888, and Asn907 each carry an N-linked (GlcNAc...) asparagine glycan.

Belongs to the glycosyl hydrolase 31 family. Expressed in roots, stems, leaves, flowers and siliques. Expressed in cell types undergoing cell wall modifications, including trichomes, vasculature, stomata, and elongating anther filaments. Not detected in pollen.

The protein resides in the secreted. It is found in the cell wall. Its subcellular location is the extracellular space. The protein localises to the apoplast. The enzyme catalyses Hydrolysis of terminal, non-reducing alpha-D-xylose residues with release of alpha-D-xylose.. Glycoside hydrolase releasing xylosyl residues from xyloglucan oligosaccharides at the non-reducing end. Has alpha-xylosidase activity against xylan oligosaccharides. Also has alpha-glucosidase activity against p-nitrophenyl-alpha-D-glucopyranoside. No activity against p-nitrophenyl-D-xyloside. The polypeptide is Alpha-xylosidase 1 (Arabidopsis thaliana (Mouse-ear cress)).